We begin with the raw amino-acid sequence, 566 residues long: Transcription factor atf1 (566 aa).

The span at 1-42 shows a compositional bias: polar residues; that stretch reads MSPSPVNTSTEPASVAAVSNGNATASSTQVPENNQSDSFAPP. 4 disordered regions span residues 1-83, 96-117, 315-345, and 357-479; these read MSPS…FVGS, SFGS…PSLS, QQQT…PQAS, and SQQF…KSFL. Residues 43-53 show a composition bias toward low complexity; sequence SNNSQQNQQSS. 2 stretches are compositionally biased toward polar residues: residues 65 to 76 and 97 to 106; these read ANANPADQSDGV and FGSTASVGQG. Positions 107 to 117 are enriched in low complexity; sequence NPSLNRNPSLS. 2 stretches are compositionally biased toward polar residues: residues 379–412 and 421–460; these read TLRQ…TANS and TDYS…YSKG. Over residues 466-479 the composition is skewed to basic and acidic residues; it reads SKNETDEEKRKSFL. The bZIP domain occupies 472–535; it reads EEKRKSFLER…VSLKTLLIAH (64 aa). A basic motif region spans residues 474–503; the sequence is KRKSFLERNRQAALKCRQRKKQWLSNLQAK. The tract at residues 514–528 is leucine-zipper; sequence LSAQVSALREEIVSL.

It belongs to the bZIP family. Heterodimer of pcr1/mts2 and atf1/mts1. Phosphorylated by sty1/spc1.

The protein resides in the nucleus. Transcription factor required for sexual development and entry into stationary phase. Binds and activates CRE sites (cAMP-response elements, also known as M26 meiotic recombination hotspots). The sequence is that of Transcription factor atf1 (atf1) from Schizosaccharomyces pombe (strain 972 / ATCC 24843) (Fission yeast).